The chain runs to 865 residues: High affinity cAMP-specific and IBMX-insensitive 3',5'-cyclic phosphodiesterase 8B (865 aa).

Disordered stretches follow at residues 17 to 40 and 52 to 92; these read CRDS…TAPL and AMPP…TCRG. The segment covering 23–36 has biased composition (polar residues); the sequence is SNSPRQTSSVSQGP. Over residues 75 to 90 the composition is skewed to low complexity; the sequence is GSGSSTGSSGPATTTC. A PAS domain is found at 247–318; it reads ACNSVFTALD…DTINTCIKKG (72 aa). Residues 373–415 form a disordered region; the sequence is IHRDSGDNSQTEPHSFRHKSRRKESIDVKSISSRGSDAPSLQN. A compositionally biased stretch (polar residues) spans 402–415; the sequence is SISSRGSDAPSLQN. Ser-497 carries the phosphoserine modification. Positions 519–855 constitute a PDEase domain; sequence TINDVPPSIA…KHWKTLDDLK (337 aa). His-595 acts as the Proton donor in catalysis. Positions 599, 635, and 636 each coordinate a divalent metal cation. Phosphoserine is present on residues Ser-731 and Ser-734. Asp-761 is an a divalent metal cation binding site.

Belongs to the cyclic nucleotide phosphodiesterase family. PDE8 subfamily. A divalent metal cation is required as a cofactor. As to expression, widely expressed.

The catalysed reaction is 3',5'-cyclic AMP + H2O = AMP + H(+). The protein operates within purine metabolism; 3',5'-cyclic AMP degradation; AMP from 3',5'-cyclic AMP: step 1/1. Its function is as follows. Hydrolyzes the second messenger cAMP, which is a key regulator of many important physiological processes. May be involved in specific signaling in the thyroid gland. This Mus musculus (Mouse) protein is High affinity cAMP-specific and IBMX-insensitive 3',5'-cyclic phosphodiesterase 8B (Pde8b).